Reading from the N-terminus, the 267-residue chain is 2-keto-3-deoxy-L-rhamnonate aldolase (267 aa).

Histidine 49 acts as the Proton acceptor in catalysis. Position 151 (glutamine 151) interacts with substrate. Glutamate 153 is a Mg(2+) binding site. Residues alanine 178 and aspartate 179 each contribute to the substrate site. Aspartate 179 contributes to the Mg(2+) binding site.

It belongs to the HpcH/HpaI aldolase family. KDR aldolase subfamily. As to quaternary structure, homohexamer. The cofactor is Mg(2+).

The enzyme catalyses 2-dehydro-3-deoxy-L-rhamnonate = (S)-lactaldehyde + pyruvate. In terms of biological role, catalyzes the reversible retro-aldol cleavage of 2-keto-3-deoxy-L-rhamnonate (KDR) to pyruvate and lactaldehyde. The sequence is that of 2-keto-3-deoxy-L-rhamnonate aldolase from Salmonella enteritidis PT4 (strain P125109).